A 99-amino-acid polypeptide reads, in one-letter code: Putative RNA-binding protein RbpE (99 aa).

Residues 2–79 (SIYVGNLSYS…RVLKVNKARP (78 aa)) enclose the RRM domain. A disordered region spans residues 78–99 (RPREEKGARSGGGSWSRNNGGY). Residues 86–99 (RSGGGSWSRNNGGY) are compositionally biased toward gly residues.

The sequence is that of Putative RNA-binding protein RbpE (rbpE) from Nostoc sp. (strain PCC 7120 / SAG 25.82 / UTEX 2576).